Reading from the N-terminus, the 250-residue chain is UPF0259 membrane protein SG1383 (250 aa).

Transmembrane regions (helical) follow at residues 20–40, 86–106, 121–141, 146–166, 191–211, and 219–239; these read FASI…LGHA, AGTL…LTMI, IGLS…TTLL, LLLI…APVI, LLAP…LLAT, and LVAV…LLIY.

Belongs to the UPF0259 family.

The protein localises to the cell inner membrane. The chain is UPF0259 membrane protein SG1383 from Sodalis glossinidius (strain morsitans).